The following is a 141-amino-acid chain: Hemoglobin subunit alpha (141 aa).

One can recognise a Globin domain in the interval 1-141 (VLSAADKSNV…VSTVLTSKYR (141 aa)). The residue at position 3 (Ser-3) is a Phosphoserine. Lys-7 and Lys-11 each carry N6-succinyllysine. Residue Lys-16 is modified to N6-acetyllysine; alternate. At Lys-16 the chain carries N6-succinyllysine; alternate. Tyr-24 is modified (phosphotyrosine). Ser-35 carries the post-translational modification Phosphoserine. Lys-40 bears the N6-succinyllysine mark. Position 49 is a phosphoserine (Ser-49). His-58 provides a ligand contact to O2. Residue His-87 coordinates heme b. Ser-102 bears the Phosphoserine mark. At Thr-108 the chain carries Phosphothreonine. Position 124 is a phosphoserine (Ser-124). Residues Thr-134 and Thr-137 each carry the phosphothreonine modification. Phosphoserine is present on Ser-138.

This sequence belongs to the globin family. As to quaternary structure, heterotetramer of two alpha chains and two beta chains. In terms of tissue distribution, red blood cells.

Its function is as follows. Involved in oxygen transport from the lung to the various peripheral tissues. Hemopressin acts as an antagonist peptide of the cannabinoid receptor CNR1. Hemopressin-binding efficiently blocks cannabinoid receptor CNR1 and subsequent signaling. The chain is Hemoglobin subunit alpha (HBA) from Felis catus (Cat).